We begin with the raw amino-acid sequence, 500 residues long: Maintenance of mitochondrial morphology protein 1 (500 aa).

Over 1-42 (MATQVATPLSPSYTSELIIVCHHVLQHSPTPLTPHSLSFTQG) the chain is Lumenal. The helical transmembrane segment at 43–63 (FLLGQLSIALLIFFFIKFFIF) threads the bilayer. At 64–500 (GEPPSADDRS…PGALAPGTFR (437 aa)) the chain is on the cytoplasmic side. An SMP-LTD domain is found at 141-375 (QPESLDWFNV…EPRFQQIVLP (235 aa)). Low complexity-rich tracts occupy residues 283 to 294 (SSSPPSTSTTTP) and 302 to 316 (NSTT…HRPT). Disordered stretches follow at residues 283–316 (SSSP…HRPT) and 406–500 (EEEE…GTFR). The segment covering 406 to 415 (EEEEEEEEDG) has biased composition (acidic residues). Over residues 438–471 (EGAKLREAEIRAGVRKQERPGMSRAQTSREEGVR) the composition is skewed to basic and acidic residues.

The protein belongs to the MMM1 family. In terms of assembly, homodimer. Component of the ER-mitochondria encounter structure (ERMES) or MDM complex, composed of MMM1, MDM10, MDM12 and MDM34. An MMM1 homodimer associates with one molecule of MDM12 on each side in a pairwise head-to-tail manner, and the SMP-LTD domains of MMM1 and MDM12 generate a continuous hydrophobic tunnel for phospholipid trafficking.

Its subcellular location is the endoplasmic reticulum membrane. Its function is as follows. Component of the ERMES/MDM complex, which serves as a molecular tether to connect the endoplasmic reticulum (ER) and mitochondria. Components of this complex are involved in the control of mitochondrial shape and protein biogenesis, and function in nonvesicular lipid trafficking between the ER and mitochondria. The MDM12-MMM1 subcomplex functions in the major beta-barrel assembly pathway that is responsible for biogenesis of all outer membrane beta-barrel proteins, and acts in a late step after the SAM complex. The MDM10-MDM12-MMM1 subcomplex further acts in the TOM40-specific pathway after the action of the MDM12-MMM1 complex. Essential for establishing and maintaining the structure of mitochondria and maintenance of mtDNA nucleoids. In Phaeosphaeria nodorum (strain SN15 / ATCC MYA-4574 / FGSC 10173) (Glume blotch fungus), this protein is Maintenance of mitochondrial morphology protein 1.